We begin with the raw amino-acid sequence, 146 residues long: Probable actin-related protein 2/3 complex subunit 5 (146 aa).

The protein belongs to the ARPC5 family. In terms of assembly, component of the Arp2/3 complex composed of ARP2, ARP3, ARPC1B/p41-ARC, ARPC2/p34-ARC, ARPC3/p21-ARC, ARPC4/p20-ARC and ARPC5/p16-ARC.

Its subcellular location is the cytoplasm. It is found in the cytoskeleton. Functions as a component of the Arp2/3 complex which is involved in regulation of actin polymerization and together with an activating nucleation-promoting factor (NPF) mediates the formation of branched actin networks. The protein is Probable actin-related protein 2/3 complex subunit 5 of Caenorhabditis elegans.